Consider the following 347-residue polypeptide: Metacaspase-2 (347 aa).

A propeptide spanning residues 1–55 (MCSLITQLCDAGQLADYVGLGWLNAVSSQPYLVQALGLQPPPRRVDVDAAFRDAK) is cleaved from the precursor. Residues 1–70 (MCSLITQLCD…QPWVATPLPG (70 aa)) form a regulates substrate access to the active site region. Residue histidine 158 is part of the active site. Residues aspartate 173, aspartate 189, and aspartate 190 each contribute to the Ca(2+) site. The active site involves cysteine 213. A Ca(2+)-binding site is contributed by aspartate 220.

It belongs to the peptidase C14B family. In terms of assembly, monomer. Post-translationally, auto-proteolytic cleavage of the propeptide after Lys-55 and between the large and small subunits after Lys-268 is required for catalytic activity towards large protein substrates but is dispensable towards small oligopeptide substrates. After processing, the propeptide and the large and small subunits remain associated by non-covalent bonds. In vivo, the unprocessed enzyme appears to be the predominant form.

It localises to the recycling endosome. With respect to regulation, activated by Ca(2+). In response to calcium binding, the 280-loop, a disordered loop consisting of residues 269-275, undergoes a conformational change which stabilizes substrates in the active site. The binding to the substrate triggers the release of the N-terminal region resulting in the activation of the enzyme. Proteolytic cleavage is required for catalytic activity towards large protein substrates. Cysteine protease that cleaves specifically after arginine or lysine residues. In Trypanosoma brucei brucei (strain 927/4 GUTat10.1), this protein is Metacaspase-2.